A 246-amino-acid polypeptide reads, in one-letter code: Small ribosomal subunit protein uS3 (246 aa).

In terms of domain architecture, KH type-2 spans 23–94 (LNEFLTRELA…RIELYAEKVA (72 aa)). The segment at 201–246 (GPKKPLPDNVSVVEPKEEKIYETPETEYKIPPPSKPLDDLSEAKVL) is disordered. Composition is skewed to basic and acidic residues over residues 214-228 (EPKEEKIYETPETEY) and 236-246 (PLDDLSEAKVL). Residues threonine 223 and threonine 226 each carry the phosphothreonine modification. The residue at position 241 (serine 241) is a Phosphoserine.

It belongs to the universal ribosomal protein uS3 family. In terms of assembly, interacts with LTV1; the interaction is RNA-independent.

It localises to the cytoplasm. The protein localises to the nucleus. Has DNA repair activity directed towards the mutagenic lesions 8-oxoguanine and abasic sites in DNA. It can cleave DNA containing 8-oxoguanine residues efficiently. Also acts as an ap lyase, cleaving phosphodiester bonds via a beta,delta elimination reaction. This is Small ribosomal subunit protein uS3 (RpS3) from Drosophila melanogaster (Fruit fly).